Consider the following 155-residue polypeptide: MPEAGAIRPDGTVLGFDVGSRRIGVAVGTALGAGARAVAVINVHANGPDWVALDRVYKQWRPDGLVVGDPLTLDDKDQPARKRAHAFGRQLRERYALPVVLIDERSSSVEAAQRFARERADGRKRRRDAEALDAMAAAVIVERWLAAPDQATSLP.

It belongs to the YqgF nuclease family.

It is found in the cytoplasm. Its function is as follows. Could be a nuclease involved in processing of the 5'-end of pre-16S rRNA. This chain is Putative pre-16S rRNA nuclease, found in Xanthomonas euvesicatoria pv. vesicatoria (strain 85-10) (Xanthomonas campestris pv. vesicatoria).